Here is a 147-residue protein sequence, read N- to C-terminus: Protein archease (147 aa).

Residues aspartate 17, aspartate 146, and isoleucine 147 each coordinate Ca(2+).

The protein belongs to the archease family.

Its function is as follows. Activates the tRNA-splicing ligase complex by facilitating the enzymatic turnover of catalytic subunit RtcB. Acts by promoting the guanylylation of RtcB, a key intermediate step in tRNA ligation. Can also alter the NTP specificity of RtcB such that ATP, dGTP or ITP is used efficiently. The sequence is that of Protein archease from Pyrobaculum calidifontis (strain DSM 21063 / JCM 11548 / VA1).